The sequence spans 87 residues: Cytochrome c5 (87 aa).

The heme site is built by Cys19, Cys22, His23, and Met63. The cysteines at positions 69 and 72 are disulfide-linked.

Belongs to the cytochrome c family. As to quaternary structure, homodimer. Post-translationally, binds 1 heme group per subunit.

It is unreactive with cytochrome c reductase or oxidase but seems to function as an intermediate in nitrate respiration of facultative anaerobic pseudmonads. The protein is Cytochrome c5 of Ectopseudomonas mendocina (Pseudomonas mendocina).